The sequence spans 185 residues: Ribosome-recycling factor (185 aa).

This sequence belongs to the RRF family.

It is found in the cytoplasm. Functionally, responsible for the release of ribosomes from messenger RNA at the termination of protein biosynthesis. May increase the efficiency of translation by recycling ribosomes from one round of translation to another. This is Ribosome-recycling factor from Wolbachia pipientis wMel.